The sequence spans 356 residues: MNYNKKIIHIDMDCFYASIEIRNNPSLKGKPVAVGGKANQRGVLTTCNYEARKFGLHSAMSTSQALKRCPNLILLPVNMSLYKAVSEQIHCIFRRYTDIIEPISLDEAYLDVTACKQHSGSATWIAQAIRQDIWQELQLTSSAGIAPLKFLAKIASDQNKPNGQFVICPEEVADFVKTLPLKKISGVGKVAQEKLAQLGFITCGDIQQADQALIYQQFGKFGQRLWDFCHGIDPREVEPHRPRKSLAVENTLLSDLDTLTEAEDVVKSHYQTLLFRLQRNWGDKPLSDLKKIGIKLKFDDFTQTTLERTTDGIAEHHFLQLLQQIWQRRKGRKIRLIGLNVHFPEEKITKQLNLWE.

A UmuC domain is found at 7–188; it reads IIHIDMDCFY…LPLKKISGVG (182 aa). Residues Asp11 and Asp106 each contribute to the Mg(2+) site. Glu107 is an active-site residue.

This sequence belongs to the DNA polymerase type-Y family. Monomer. The cofactor is Mg(2+).

It is found in the cytoplasm. The catalysed reaction is DNA(n) + a 2'-deoxyribonucleoside 5'-triphosphate = DNA(n+1) + diphosphate. Poorly processive, error-prone DNA polymerase involved in untargeted mutagenesis. Copies undamaged DNA at stalled replication forks, which arise in vivo from mismatched or misaligned primer ends. These misaligned primers can be extended by PolIV. Exhibits no 3'-5' exonuclease (proofreading) activity. May be involved in translesional synthesis, in conjunction with the beta clamp from PolIII. The polypeptide is DNA polymerase IV (Glaesserella parasuis serovar 5 (strain SH0165) (Haemophilus parasuis)).